The following is a 337-amino-acid chain: Transaldolase (337 aa).

The Nuclear localization signal motif lies at 1 to 10; that stretch reads MSGSPVKRQR. Position 115 is an N6-acetyllysine (Lys-115). The active-site Schiff-base intermediate with substrate is the Lys-142. Position 219 is an N6-acetyllysine (Lys-219). Ser-237 and Ser-256 each carry phosphoserine. Lys-269, Lys-286, and Lys-321 each carry N6-acetyllysine.

The protein belongs to the transaldolase family. Type 1 subfamily. As to quaternary structure, homodimer. Interacts with KPNA1 and KPNA4.

Its subcellular location is the nucleus. It localises to the cytoplasm. It carries out the reaction D-sedoheptulose 7-phosphate + D-glyceraldehyde 3-phosphate = D-erythrose 4-phosphate + beta-D-fructose 6-phosphate. The protein operates within carbohydrate degradation; pentose phosphate pathway; D-glyceraldehyde 3-phosphate and beta-D-fructose 6-phosphate from D-ribose 5-phosphate and D-xylulose 5-phosphate (non-oxidative stage): step 2/3. Its function is as follows. Catalyzes the rate-limiting step of the non-oxidative phase in the pentose phosphate pathway. Catalyzes the reversible conversion of sedheptulose-7-phosphate and D-glyceraldehyde 3-phosphate into erythrose-4-phosphate and beta-D-fructose 6-phosphate. The sequence is that of Transaldolase (Taldo1) from Rattus norvegicus (Rat).